The chain runs to 547 residues: Auxin transporter-like protein 3 (547 aa).

Residues M1 to Q74 lie on the Cytoplasmic side of the membrane. The helical transmembrane segment at V75 to A92 threads the bilayer. Residues S93 to G94 lie on the Extracellular side of the membrane. Residues L95–L115 form a helical membrane-spanning segment. Residues Y116–N151 are Cytoplasmic-facing. The chain crosses the membrane as a helical span at residues V152–C172. Topologically, residues A173–T187 are extracellular. Residues W188–Y208 traverse the membrane as a helical segment. Residues R209–W211 are Cytoplasmic-facing. The helical transmembrane segment at S212 to I232 threads the bilayer. At H233 to I247 the chain is on the extracellular side. Residues V248–V268 traverse the membrane as a helical segment. Over E269–K281 the chain is Cytoplasmic. The helical transmembrane segment at A282–A302 threads the bilayer. Residues Y303 to A329 lie on the Extracellular side of the membrane. The helical transmembrane segment at V330–F350 threads the bilayer. The Cytoplasmic portion of the chain corresponds to V351–R371. The helical transmembrane segment at L372–N392 threads the bilayer. A topological domain (extracellular) is located at residue S393. A helical membrane pass occupies residues A394 to V414. Topologically, residues T415–Y440 are cytoplasmic. A helical membrane pass occupies residues V441–A461. Residues S462–L547 lie on the Extracellular side of the membrane. Residue N509 is glycosylated (N-linked (GlcNAc...) asparagine).

This sequence belongs to the amino acid/polyamine transporter 2 family. Amino acid/auxin permease (AAAP) (TC 2.A.18.1) subfamily.

It is found in the cell membrane. Its function is as follows. Carrier protein involved in proton-driven auxin influx. May mediate the formation of auxin gradient from developing leaves (site of auxin biosynthesis) to tips. The polypeptide is Auxin transporter-like protein 3 (Oryza sativa subsp. japonica (Rice)).